The primary structure comprises 246 residues: Aspartate/glutamate leucyltransferase (246 aa).

Belongs to the R-transferase family. Bpt subfamily.

It localises to the cytoplasm. It catalyses the reaction N-terminal L-glutamyl-[protein] + L-leucyl-tRNA(Leu) = N-terminal L-leucyl-L-glutamyl-[protein] + tRNA(Leu) + H(+). It carries out the reaction N-terminal L-aspartyl-[protein] + L-leucyl-tRNA(Leu) = N-terminal L-leucyl-L-aspartyl-[protein] + tRNA(Leu) + H(+). Its function is as follows. Functions in the N-end rule pathway of protein degradation where it conjugates Leu from its aminoacyl-tRNA to the N-termini of proteins containing an N-terminal aspartate or glutamate. The sequence is that of Aspartate/glutamate leucyltransferase from Rhodospirillum rubrum (strain ATCC 11170 / ATH 1.1.1 / DSM 467 / LMG 4362 / NCIMB 8255 / S1).